The following is a 280-amino-acid chain: 4-diphosphocytidyl-2-C-methyl-D-erythritol kinase (280 aa).

Lysine 11 is a catalytic residue. ATP is bound at residue 95 to 105 (PVGAGLGGGSS). Residue aspartate 137 is part of the active site.

The protein belongs to the GHMP kinase family. IspE subfamily.

The catalysed reaction is 4-CDP-2-C-methyl-D-erythritol + ATP = 4-CDP-2-C-methyl-D-erythritol 2-phosphate + ADP + H(+). It participates in isoprenoid biosynthesis; isopentenyl diphosphate biosynthesis via DXP pathway; isopentenyl diphosphate from 1-deoxy-D-xylulose 5-phosphate: step 3/6. In terms of biological role, catalyzes the phosphorylation of the position 2 hydroxy group of 4-diphosphocytidyl-2C-methyl-D-erythritol. This chain is 4-diphosphocytidyl-2-C-methyl-D-erythritol kinase, found in Geobacter sp. (strain M21).